A 415-amino-acid chain; its full sequence is Serine--tRNA ligase (415 aa).

An L-serine-binding site is contributed by 231 to 233 (TAE). 262–264 (RSE) provides a ligand contact to ATP. E285 contributes to the L-serine binding site. Position 349–352 (349–352 (EISS)) interacts with ATP. S383 is an L-serine binding site.

This sequence belongs to the class-II aminoacyl-tRNA synthetase family. Type-1 seryl-tRNA synthetase subfamily. In terms of assembly, homodimer. The tRNA molecule binds across the dimer.

It is found in the cytoplasm. The catalysed reaction is tRNA(Ser) + L-serine + ATP = L-seryl-tRNA(Ser) + AMP + diphosphate + H(+). It catalyses the reaction tRNA(Sec) + L-serine + ATP = L-seryl-tRNA(Sec) + AMP + diphosphate + H(+). The protein operates within aminoacyl-tRNA biosynthesis; selenocysteinyl-tRNA(Sec) biosynthesis; L-seryl-tRNA(Sec) from L-serine and tRNA(Sec): step 1/1. Catalyzes the attachment of serine to tRNA(Ser). Is also able to aminoacylate tRNA(Sec) with serine, to form the misacylated tRNA L-seryl-tRNA(Sec), which will be further converted into selenocysteinyl-tRNA(Sec). This chain is Serine--tRNA ligase, found in Helicobacter pylori (strain P12).